The chain runs to 177 residues: Interleukin-1 receptor antagonist protein (177 aa).

The signal sequence occupies residues 1–25 (MRPSRSTRRHLISLLLFLFHSETAC). A disulfide bridge connects residues Cys91 and Cys141. An N-linked (GlcNAc...) asparagine glycan is attached at Asn109.

Belongs to the IL-1 family.

It is found in the secreted. Anti-inflammatory antagonist of interleukin-1 family of proinflammatory cytokines such as interleukin-1beta/IL1B and interleukin-1alpha/IL1A. Protects from immune dysregulation and uncontrolled systemic inflammation triggered by IL1 for a range of innate stimulatory agents such as pathogens. This chain is Interleukin-1 receptor antagonist protein (IL1RN), found in Oryctolagus cuniculus (Rabbit).